A 159-amino-acid chain; its full sequence is Carbohydrate sulfotransferase 15 (159 aa).

The Lumenal portion of the chain corresponds to 1–159 (SGTTDFYRRI…YQPHNERLVK (159 aa)). N-linked (GlcNAc...) asparagine glycosylation is found at N42 and N112.

Belongs to the sulfotransferase 1 family. A divalent metal cation is required as a cofactor. The cofactor is glutathione.

It localises to the golgi apparatus membrane. The catalysed reaction is dermatan 4'-sulfate + n 3'-phosphoadenylyl sulfate = dermatan 4',6'-bissulfate + n adenosine 3',5'-bisphosphate + n H(+). It catalyses the reaction chondroitin 4'-sulfate + n 3'-phosphoadenylyl sulfate = chondroitin 4',6'-bissulfate + n adenosine 3',5'-bisphosphate + n H(+). Functionally, sulfotransferase that transfers sulfate from 3'-phosphoadenosine 5'-phosphosulfate (PAPS) to the C-6 hydroxyl group of the GalNAc 4-sulfate residue of chondroitin sulfate A and forms chondroitin sulfate E containing GlcA-GalNAc(4,6-SO(4)) repeating units. In Nototodarus sloanii (Wellington flying squid), this protein is Carbohydrate sulfotransferase 15 (GALNAC4S6ST).